A 298-amino-acid chain; its full sequence is Syntenin-1 (298 aa).

An N-acetylserine modification is found at Ser-2. Residues 2-60 are interaction with PDCD6IP; sequence SLYPSLEDLKVDKVIQAQTAFSANPANPAILSEASAPIPHDGNLYPRLYPELSQYMGLS. Short sequence motifs (LYPX(n)L motif) lie at residues 3–7, 45–49, and 49–53; these read LYPSL, LYPRL, and LYPEL. Residue Ser-6 is modified to Phosphoserine. At Tyr-46 the chain carries Phosphotyrosine. PDZ domains follow at residues 114–193 and 198–273; these read EVIL…IRDR and TITM…MPAF. A 1,2-diacyl-sn-glycero-3-phospho-(1D-myo-inositol-4,5-bisphosphate) contacts are provided by residues Asn-215 and 250-251; that span reads KD.

As to quaternary structure, monomer and homodimer. Interacts with SDC1, SDC2, SDC3, SDC4, NRXN2, EPHA7, EPHB1, NF2 isoform 1, TGFA and IL5RA. Interacts with NFASC and PTPRJ. Interacts with SDCBP2. Interacts with PDCD6IP. Forms a complex with PDCD6IP and SDC2. Interacts (via C-terminus) with TGFBR1. Binds to FZD7; this interaction is increased by inositol trisphosphate (IP3). Interacts with SMO. In terms of processing, phosphorylated on tyrosine residues. In terms of tissue distribution, expressed in lung cancers, including adenocarcinoma, squamous cell carcinoma and small-cell carcinoma (at protein level). Widely expressed. Expressed in fetal kidney, liver, lung and brain. In adult highest expression in heart and placenta.

The protein resides in the cell junction. It is found in the focal adhesion. Its subcellular location is the adherens junction. It localises to the cell membrane. The protein localises to the endoplasmic reticulum membrane. The protein resides in the nucleus. It is found in the melanosome. Its subcellular location is the cytoplasm. It localises to the cytosol. The protein localises to the cytoskeleton. The protein resides in the secreted. It is found in the extracellular exosome. Its subcellular location is the membrane raft. In terms of biological role, multifunctional adapter protein involved in diverse array of functions including trafficking of transmembrane proteins, neuro and immunomodulation, exosome biogenesis, and tumorigenesis. Positively regulates TGFB1-mediated SMAD2/3 activation and TGFB1-induced epithelial-to-mesenchymal transition (EMT) and cell migration in various cell types. May increase TGFB1 signaling by enhancing cell-surface expression of TGFR1 by preventing the interaction between TGFR1 and CAV1 and subsequent CAV1-dependent internalization and degradation of TGFR1. In concert with SDC1/4 and PDCD6IP, regulates exosome biogenesis. Regulates migration, growth, proliferation, and cell cycle progression in a variety of cancer types. In adherens junctions may function to couple syndecans to cytoskeletal proteins or signaling components. Seems to couple transcription factor SOX4 to the IL-5 receptor (IL5RA). May also play a role in vesicular trafficking. Seems to be required for the targeting of TGFA to the cell surface in the early secretory pathway. This is Syntenin-1 (SDCBP) from Homo sapiens (Human).